The chain runs to 137 residues: GEL complex subunit OPTI (137 aa).

Topologically, residues 1 to 44 are cytoplasmic; it reads MSGGRRKEEPPQPQLANGALKVSVWSKVLRSDAAWEDKDEFLDV. The chain crosses the membrane as a helical span at residues 45-65; the sequence is IYWFRQIIAVVLGVIWGVLPL. A topological domain (lumenal) is located at residue Arg-66. A helical membrane pass occupies residues 67 to 84; it reads GFLGIAGFCLINAGVLYL. The Cytoplasmic segment spans residues 85-103; it reads YFSNYLQIDEEEYGGTWEL. Residues 104 to 127 form a helical membrane-spanning segment; it reads TKEGFMTSFALFMVCVADSFTTGH. Over 128–137 the chain is Lumenal; that stretch reads LDHLLHCHPL.

This sequence belongs to the EMC6 family. In terms of assembly, component of the GET- and EMC-like (GEL) complex, composed of RAB5IF/OPTI and TMCO1. The GEL complex is part of the multi-pass translocon (MPT) complex, composed of three subcomplexes, the GEL complex (composed of RAB5IF/OPTI and TMCO1), the BOS complex (composed of NCLN/Nicalin, NOMO and TMEM147) and the PAT complex (composed of WDR83OS/Asterix and CCDC47). The MPT complex associates with the SEC61 complex. Interacts with NDUFS3, NDUFA4, NDUFV1, NDUFA9 and NDUFS8 of the mitochondrial membrane respiratory chain NADH dehydrogenase (Complex I). Interacts with UQCRC2 of the ubiquinol-cytochrome c reductase complex (Complex III). Interacts with COX5A and COX7C of the cytochrome c oxidase complex (Complex IV). As to expression, expressed in embryonic stem cells and differentiated neuronal cells.

It is found in the endoplasmic reticulum membrane. Its subcellular location is the mitochondrion inner membrane. In terms of biological role, component of the multi-pass translocon (MPT) complex that mediates insertion of multi-pass membrane proteins into the lipid bilayer of membranes. The MPT complex takes over after the SEC61 complex: following membrane insertion of the first few transmembrane segments of proteins by the SEC61 complex, the MPT complex occludes the lateral gate of the SEC61 complex to promote insertion of subsequent transmembrane regions. Within the MPT complex, the GEL subcomplex may mediate insertion of transmembrane regions into the membrane. In addition to its role in multi-pass membrane insertion, RAB5IF/OPTI also acts as an assembly factor for mitochondrial respiratory complexes. In Homo sapiens (Human), this protein is GEL complex subunit OPTI.